Reading from the N-terminus, the 485-residue chain is Aldehyde dehydrogenase family 3 member A2 (485 aa).

Residues 1–463 (MELEVRRVRQ…FLLKRFNKEK (463 aa)) lie on the Cytoplasmic side of the membrane. 185 to 190 (GNTAVG) serves as a coordination point for NAD(+). Active-site residues include Glu-207 and Cys-241. Ser-293 carries the phosphoserine modification. The helical transmembrane segment at 464 to 484 (LGLLLLTFLGIVAAVLVKAEY) threads the bilayer. A Prevents secretion from ER motif is present at residues 481 to 484 (KAEY).

The protein belongs to the aldehyde dehydrogenase family. In terms of assembly, homodimer.

It localises to the microsome membrane. The protein localises to the endoplasmic reticulum membrane. The catalysed reaction is an aldehyde + NAD(+) + H2O = a carboxylate + NADH + 2 H(+). The enzyme catalyses a fatty aldehyde + NAD(+) + H2O = a fatty acid + NADH + 2 H(+). It catalyses the reaction (2E)-hexadecenal + NAD(+) + H2O = (E)-hexadec-2-enoate + NADH + 2 H(+). It carries out the reaction hexadecanoate + NADH + 2 H(+) = hexadecanal + NAD(+) + H2O. The catalysed reaction is 22-oxodocosanoate + NAD(+) + H2O = docosanedioate + NADH + 2 H(+). The enzyme catalyses 2,6,10,14-tetramethylpentadecanal + NAD(+) + H2O = 2,6,10,14-tetramethylpentadecanoate + NADH + 2 H(+). It catalyses the reaction octadecanal + NAD(+) + H2O = octadecanoate + NADH + 2 H(+). It carries out the reaction dodecanoate + NADH + 2 H(+) = dodecanal + NAD(+) + H2O. The catalysed reaction is decanal + NAD(+) + H2O = decanoate + NADH + 2 H(+). The enzyme catalyses tetradecanal + NAD(+) + H2O = tetradecanoate + NADH + 2 H(+). It catalyses the reaction octanal + NAD(+) + H2O = octanoate + NADH + 2 H(+). It carries out the reaction heptanal + NAD(+) + H2O = heptanoate + NADH + 2 H(+). The catalysed reaction is (2E,6E)-farnesal + NAD(+) + H2O = (2E,6E)-farnesoate + NADH + 2 H(+). In terms of biological role, catalyzes the oxidation of medium and long-chain aliphatic aldehydes to fatty acids. Active on a variety of saturated and unsaturated aliphatic aldehydes between 6 and 24 carbons in length. Responsible for conversion of the sphingosine 1-phosphate (S1P) degradation product hexadecenal to hexadecenoic acid. This chain is Aldehyde dehydrogenase family 3 member A2 (ALDH3A2), found in Pongo abelii (Sumatran orangutan).